A 103-amino-acid chain; its full sequence is Histone H4 (103 aa).

The span at 1–14 shows a compositional bias: gly residues; sequence MSGRGKGGKGLGKG. Residues 1-20 are disordered; sequence MSGRGKGGKGLGKGGAKRHR. An N-acetylserine modification is found at serine 2. N6-acetyllysine is present on lysine 17. Residues 17–21 mediate DNA binding; it reads KRHRK. At lysine 21 the chain carries N6-methyllysine.

The protein belongs to the histone H4 family. The nucleosome is a histone octamer containing two molecules each of H2A, H2B, H3 and H4 assembled in one H3-H4 heterotetramer and two H2A-H2B heterodimers. The octamer wraps approximately 147 bp of DNA.

It is found in the nucleus. Its subcellular location is the chromosome. Core component of nucleosome. Nucleosomes wrap and compact DNA into chromatin, limiting DNA accessibility to the cellular machineries which require DNA as a template. Histones thereby play a central role in transcription regulation, DNA repair, DNA replication and chromosomal stability. DNA accessibility is regulated via a complex set of post-translational modifications of histones, also called histone code, and nucleosome remodeling. The polypeptide is Histone H4 (Pyrenomonas salina).